We begin with the raw amino-acid sequence, 1152 residues long: Integrin alpha-M (1152 aa).

The N-terminal stretch at 1–16 (MALRVLLLTALTLCHG) is a signal peptide. The Extracellular segment spans residues 17 to 1104 (FNLDTENAMT…TKVEPFEVPN (1088 aa)). 2 FG-GAP repeats span residues 18 to 75 (NLDT…SCEP) and 76 to 135 (IRLQ…QQPQ). An intrachain disulfide couples Cys-66 to Cys-73. A glycan (N-linked (GlcNAc...) asparagine) is linked at Asn-86. A disulfide bridge connects residues Cys-105 and Cys-123. Residues 150-328 (DIAFLIDGSG…EALKTIQNQL (179 aa)) form the VWFA domain. Asn-240 carries N-linked (GlcNAc...) asparagine glycosylation. FG-GAP repeat units lie at residues 339–390 (QTGS…STFI), 391–442 (NMTR…TGMW), 443–503 (ESNA…RARW), 506–564 (DAVL…SGIS), and 569–629 (QRIA…FNPR). Asn-391 is a glycosylation site (N-linked (GlcNAc...) asparagine). Positions 465, 467, 469, 473, 529, 531, 533, 537, 592, 596, and 600 each coordinate Ca(2+). An N-linked (GlcNAc...) asparagine glycan is attached at Asn-469. The cysteines at positions 654 and 711 are disulfide-linked. Residues Asn-692, Asn-696, and Asn-734 are each glycosylated (N-linked (GlcNAc...) asparagine). Cysteines 770 and 776 form a disulfide. N-linked (GlcNAc...) asparagine glycosylation is present at Asn-801. A disulfide bridge links Cys-847 with Cys-864. Residues Asn-880, Asn-900, Asn-911, Asn-940, Asn-946, Asn-978, Asn-993, and Asn-1021 are each glycosylated (N-linked (GlcNAc...) asparagine). 2 disulfide bridges follow: Cys-998–Cys-1022 and Cys-1027–Cys-1032. Asn-1044, Asn-1050, and Asn-1075 each carry an N-linked (GlcNAc...) asparagine glycan. The helical transmembrane segment at 1105-1128 (PLPLIVGSSVGGLLLLALITAALY) threads the bilayer. Over 1129–1152 (KLGFFKRQYKDMMSEGGPPGAEPQ) the chain is Cytoplasmic. The short motif at 1131-1135 (GFFKR) is the GFFKR motif element.

This sequence belongs to the integrin alpha chain family. Heterodimer of an alpha and a beta subunit. ITGAM associates with ITGB2. Found in a complex with CD177 and ITGB2/CD18. Interacts with JAM3. Interacts with THBD. Interacts with complement factor H/CFH; this interaction mediates adhesion of neutrophils to pathogens leading to pathogen clearance. Interacts with TMEM268; this interaction inhibits ITGAM degradation via the endosome-lysosome pathway. In terms of tissue distribution, predominantly expressed in monocytes and granulocytes. Expressed in neutrophils (at protein level).

The protein resides in the cell membrane. It localises to the membrane raft. Functionally, integrin ITGAM/ITGB2 is implicated in various adhesive interactions of monocytes, macrophages and granulocytes as well as in mediating the uptake of complement-coated particles and pathogens. It is identical with CR-3, the receptor for the iC3b fragment of the third complement component. It probably recognizes the R-G-D peptide in C3b. Integrin ITGAM/ITGB2 is also a receptor for fibrinogen, factor X and ICAM1. It recognizes P1 and P2 peptides of fibrinogen gamma chain. Regulates neutrophil migration. In association with beta subunit ITGB2/CD18, required for CD177-PRTN3-mediated activation of TNF primed neutrophils. May regulate phagocytosis-induced apoptosis in extravasated neutrophils. May play a role in mast cell development. Required with TYROBP/DAP12 in microglia to control production of microglial superoxide ions which promote the neuronal apoptosis that occurs during brain development. This Homo sapiens (Human) protein is Integrin alpha-M (ITGAM).